The following is a 183-amino-acid chain: Ribosome rescue factor SmrB (183 aa).

The region spanning 98–173 (LDLHGLTQMQ…GDAALLVLIE (76 aa)) is the Smr domain.

Belongs to the SmrB family. As to quaternary structure, associates with collided ribosomes, but not with correctly translating polysomes.

Functionally, acts as a ribosome collision sensor. Detects stalled/collided disomes (pairs of ribosomes where the leading ribosome is stalled and a second ribosome has collided with it) and endonucleolytically cleaves mRNA at the 5' boundary of the stalled ribosome. Stalled/collided disomes form a new interface (primarily via the 30S subunits) that binds SmrB. Cleaved mRNA becomes available for tmRNA ligation, leading to ribosomal subunit dissociation and rescue of stalled ribosomes. This chain is Ribosome rescue factor SmrB, found in Enterobacter sp. (strain 638).